The chain runs to 348 residues: Uroporphyrinogen decarboxylase (348 aa).

Substrate contacts are provided by residues 28-32, Asp-78, Tyr-154, Thr-209, and His-325; that span reads RQAGR.

The protein belongs to the uroporphyrinogen decarboxylase family. As to quaternary structure, homodimer.

Its subcellular location is the cytoplasm. It carries out the reaction uroporphyrinogen III + 4 H(+) = coproporphyrinogen III + 4 CO2. It participates in porphyrin-containing compound metabolism; protoporphyrin-IX biosynthesis; coproporphyrinogen-III from 5-aminolevulinate: step 4/4. Catalyzes the decarboxylation of four acetate groups of uroporphyrinogen-III to yield coproporphyrinogen-III. This is Uroporphyrinogen decarboxylase from Rhodopseudomonas palustris (strain BisB5).